A 466-amino-acid chain; its full sequence is Phytase A (466 aa).

An N-terminal signal peptide occupies residues M1–G19. A disulfide bond links C30 and C39. 6 residues coordinate 1D-myo-inositol hexakisphosphate: Q49, Y50, R80, H81, R84, and T87. Intrachain disulfides connect C70/C413, C214/C464, C263/C281, and C435/C443. The Nucleophile role is filled by H81. N-linked (GlcNAc...) asparagine glycosylation is found at N104 and N119. R164 lines the 1D-myo-inositol hexakisphosphate pocket. N-linked (GlcNAc...) asparagine glycosylation is found at N206 and N219. Position 300 (K300) interacts with 1D-myo-inositol hexakisphosphate. N-linked (GlcNAc...) asparagine glycosylation is found at N338 and N351. 2 residues coordinate 1D-myo-inositol hexakisphosphate: H360 and D361. An N-linked (GlcNAc...) asparagine glycan is attached at N375.

This sequence belongs to the histidine acid phosphatase family. In terms of assembly, monomer.

The protein resides in the secreted. The catalysed reaction is 1D-myo-inositol hexakisphosphate + H2O = 1D-myo-inositol 1,2,4,5,6-pentakisphosphate + phosphate. The enzyme catalyses 1D-myo-inositol 1,2,4,5,6-pentakisphosphate + H2O = 1D-myo-inositol 1,2,5,6-tetrakisphosphate + phosphate. It carries out the reaction 1D-myo-inositol 1,2,5,6-tetrakisphosphate + H2O = 1D-myo-inositol 1,2,6-trisphosphate + phosphate. It catalyses the reaction 1D-myo-inositol 1,2,6-trisphosphate + H2O = 1D-myo-inositol 1,2-bisphosphate + phosphate. The catalysed reaction is 1D-myo-inositol 1,2-bisphosphate + H2O = 1D-myo-inositol 2-phosphate + phosphate. Its function is as follows. Catalyzes the phosphate monoester hydrolysis of phytic acid (myo-inositol hexakisphosphate), which results in the stepwise formation of myo-inositol pentakis-, tetrakis-, tris-, bis-, and monophosphates, as well as the liberation of inorganic phosphate. Myo-inositol 2-monophosphate is the end product. In Aspergillus oryzae (strain ATCC 42149 / RIB 40) (Yellow koji mold), this protein is Phytase A (phyA).